Here is a 502-residue protein sequence, read N- to C-terminus: Potassium channel KAT3 (502 aa).

Residues 1 to 67 (MPRSSRMNLW…PYDPRYKVWE (67 aa)) are Cytoplasmic-facing. Residues 68 to 88 (TFLIILVVYSAWICPLEFAFL) traverse the membrane as a helical segment. At 89 to 95 (RYLPSAP) the chain is on the extracellular side. The chain crosses the membrane as a helical span at residues 96 to 116 (FVVDDVVNGFFAVDIMLTFFV). The Cytoplasmic portion of the chain corresponds to 117 to 138 (PFVDKKSYLLVNDPKKIAVRYL). A helical membrane pass occupies residues 139–159 (SSWFVFDVCSTVPFHSISLLF). At 160–169 (NEHGHDLGFK) the chain is on the extracellular side. The chain crosses the membrane as a helical; Voltage-sensor span at residues 170 to 190 (FLNVLRLWRLRRVSSMFARLE). Residues 191–204 (KDIRFNYAVIRCTK) lie on the Cytoplasmic side of the membrane. Residues 205 to 225 (LISVTLFAIHCAGCINYLIAD) traverse the membrane as a helical segment. At 226 to 252 (RYPDPRRTWIGAVMPNFREDGLWIRYV) the chain is on the extracellular side. The pore-forming intramembrane region spans 253–272 (TAMYWSITTLTTTGYGDLHA). The Extracellular segment spans residues 273-276 (ENAR). Residues 277–297 (EMLFGICYMLFNLWLTAYLIG) traverse the membrane as a helical segment. Residues 298 to 502 (NMTNLVVHST…IRSNLQQVNV (205 aa)) are Cytoplasmic-facing. A nucleoside 3',5'-cyclic phosphate is bound at residue 381 to 500 (LFKGVSSRFI…DIIRSNLQQV (120 aa)).

The protein belongs to the potassium channel family. Plant (TC 1.A.1.4) subfamily.

The protein resides in the membrane. In terms of biological role, probable inward-rectifying potassium channel. Assuming opened or closed conformations in response to the voltage difference across the membrane, the channel is activated by hyperpolarization. This Oryza sativa subsp. japonica (Rice) protein is Potassium channel KAT3.